The following is a 166-amino-acid chain: Putative universal stress protein SA1532 (166 aa).

This sequence belongs to the universal stress protein A family.

It localises to the cytoplasm. The sequence is that of Putative universal stress protein SA1532 from Staphylococcus aureus (strain N315).